Here is a 300-residue protein sequence, read N- to C-terminus: Hydroxyacyl-thioester dehydratase type 2, mitochondrial (300 aa).

The protein belongs to the HTD2 family.

The protein resides in the mitochondrion. In terms of biological role, mitochondrial 3-hydroxyacyl-thioester dehydratase involved in fatty acid biosynthesis. Required for respiratory growth and for normal mitochondrial morphology. The protein is Hydroxyacyl-thioester dehydratase type 2, mitochondrial (htd2) of Schizosaccharomyces pombe (strain 972 / ATCC 24843) (Fission yeast).